Consider the following 147-residue polypeptide: D-aminoacyl-tRNA deacylase (147 aa).

Residues 136–137 carry the Gly-cisPro motif, important for rejection of L-amino acids motif; sequence GP.

It belongs to the DTD family. Homodimer.

The protein localises to the cytoplasm. It carries out the reaction glycyl-tRNA(Ala) + H2O = tRNA(Ala) + glycine + H(+). The enzyme catalyses a D-aminoacyl-tRNA + H2O = a tRNA + a D-alpha-amino acid + H(+). Its function is as follows. An aminoacyl-tRNA editing enzyme that deacylates mischarged D-aminoacyl-tRNAs. Also deacylates mischarged glycyl-tRNA(Ala), protecting cells against glycine mischarging by AlaRS. Acts via tRNA-based rather than protein-based catalysis; rejects L-amino acids rather than detecting D-amino acids in the active site. By recycling D-aminoacyl-tRNA to D-amino acids and free tRNA molecules, this enzyme counteracts the toxicity associated with the formation of D-aminoacyl-tRNA entities in vivo and helps enforce protein L-homochirality. The sequence is that of D-aminoacyl-tRNA deacylase from Streptococcus pyogenes serotype M6 (strain ATCC BAA-946 / MGAS10394).